Here is a 202-residue protein sequence, read N- to C-terminus: Protein cuti-1 (202 aa).

Over methionine 1–serine 37 the chain is Cytoplasmic. The helical transmembrane segment at tyrosine 38 to methionine 58 threads the bilayer. Over serine 59–tryptophan 68 the chain is Extracellular. The helical transmembrane segment at leucine 69 to phenylalanine 89 threads the bilayer. The Cytoplasmic portion of the chain corresponds to glycine 90–glutamate 107. A helical transmembrane segment spans residues phenylalanine 108–isoleucine 128. At glutamine 129–tyrosine 148 the chain is on the extracellular side. Residues glycine 149–tryptophan 169 form a helical membrane-spanning segment. The Cytoplasmic segment spans residues threonine 170–arginine 202.

In terms of assembly, interacts with vps-39.

It is found in the cell membrane. The protein resides in the cytoplasm. Its function is as follows. Involved in cuticle formation and ensures cuticle shedding during larval development. Plays a role in maintaining the hypodermis. In association with vps-39, may play a role in vesicle tethering. This is Protein cuti-1 from Caenorhabditis elegans.